The sequence spans 637 residues: 1-deoxy-D-xylulose-5-phosphate synthase 1 (637 aa).

Thiamine diphosphate-binding positions include histidine 74 and 115–117; that span reads GHS. Mg(2+) is bound at residue aspartate 146. Residues 147–148, asparagine 175, tyrosine 286, and glutamate 368 each bind thiamine diphosphate; that span reads GS. Asparagine 175 provides a ligand contact to Mg(2+).

It belongs to the transketolase family. DXPS subfamily. In terms of assembly, homodimer. It depends on Mg(2+) as a cofactor. Requires thiamine diphosphate as cofactor.

It carries out the reaction D-glyceraldehyde 3-phosphate + pyruvate + H(+) = 1-deoxy-D-xylulose 5-phosphate + CO2. It functions in the pathway metabolic intermediate biosynthesis; 1-deoxy-D-xylulose 5-phosphate biosynthesis; 1-deoxy-D-xylulose 5-phosphate from D-glyceraldehyde 3-phosphate and pyruvate: step 1/1. Catalyzes the acyloin condensation reaction between C atoms 2 and 3 of pyruvate and glyceraldehyde 3-phosphate to yield 1-deoxy-D-xylulose-5-phosphate (DXP). The sequence is that of 1-deoxy-D-xylulose-5-phosphate synthase 1 from Geobacter sulfurreducens (strain ATCC 51573 / DSM 12127 / PCA).